We begin with the raw amino-acid sequence, 224 residues long: Thiamine-phosphate synthase (224 aa).

4-amino-2-methyl-5-(diphosphooxymethyl)pyrimidine contacts are provided by residues 43–47 and Asn-75; that span reads QYRPK. Mg(2+) contacts are provided by Asp-76 and Asp-95. Residue Ser-114 coordinates 4-amino-2-methyl-5-(diphosphooxymethyl)pyrimidine. 141–143 serves as a coordination point for 2-[(2R,5Z)-2-carboxy-4-methylthiazol-5(2H)-ylidene]ethyl phosphate; it reads SAT. Lys-144 is a 4-amino-2-methyl-5-(diphosphooxymethyl)pyrimidine binding site. Gly-171 is a 2-[(2R,5Z)-2-carboxy-4-methylthiazol-5(2H)-ylidene]ethyl phosphate binding site.

This sequence belongs to the thiamine-phosphate synthase family. Mg(2+) serves as cofactor.

The catalysed reaction is 2-[(2R,5Z)-2-carboxy-4-methylthiazol-5(2H)-ylidene]ethyl phosphate + 4-amino-2-methyl-5-(diphosphooxymethyl)pyrimidine + 2 H(+) = thiamine phosphate + CO2 + diphosphate. It catalyses the reaction 2-(2-carboxy-4-methylthiazol-5-yl)ethyl phosphate + 4-amino-2-methyl-5-(diphosphooxymethyl)pyrimidine + 2 H(+) = thiamine phosphate + CO2 + diphosphate. The enzyme catalyses 4-methyl-5-(2-phosphooxyethyl)-thiazole + 4-amino-2-methyl-5-(diphosphooxymethyl)pyrimidine + H(+) = thiamine phosphate + diphosphate. The protein operates within cofactor biosynthesis; thiamine diphosphate biosynthesis; thiamine phosphate from 4-amino-2-methyl-5-diphosphomethylpyrimidine and 4-methyl-5-(2-phosphoethyl)-thiazole: step 1/1. In terms of biological role, condenses 4-methyl-5-(beta-hydroxyethyl)thiazole monophosphate (THZ-P) and 2-methyl-4-amino-5-hydroxymethyl pyrimidine pyrophosphate (HMP-PP) to form thiamine monophosphate (TMP). This is Thiamine-phosphate synthase from Methylococcus capsulatus (strain ATCC 33009 / NCIMB 11132 / Bath).